The chain runs to 57 residues: uncharacterized protein (57 aa).

This is an uncharacterized protein from Escherichia coli (strain K12).